A 336-amino-acid chain; its full sequence is Ribosomal RNA small subunit methyltransferase C (336 aa).

This sequence belongs to the methyltransferase superfamily. RsmC family. Monomer.

It is found in the cytoplasm. The catalysed reaction is guanosine(1207) in 16S rRNA + S-adenosyl-L-methionine = N(2)-methylguanosine(1207) in 16S rRNA + S-adenosyl-L-homocysteine + H(+). Specifically methylates the guanine in position 1207 of 16S rRNA in the 30S particle. The polypeptide is Ribosomal RNA small subunit methyltransferase C (Hamiltonella defensa subsp. Acyrthosiphon pisum (strain 5AT)).